Here is a 261-residue protein sequence, read N- to C-terminus: Zaragozic acid A biosynthesis cluster protein 8 (261 aa).

Polar residues predominate over residues 242–254 (GTRSHTPAATQRR). Residues 242-261 (GTRSHTPAATQRRGQGRGCG) are disordered.

It functions in the pathway secondary metabolite biosynthesis. In terms of biological role, part of the gene cluster that mediates the biosynthesis of squalestatin S1 (SQS1, also known as zaragozic acid A), a heavily oxidized fungal polyketide that offers potent cholesterol lowering activity by targeting squalene synthase (SS). SQS1 is composed of a 2,8-dioxobicyclic[3.2.1]octane-3,4,5-tricarboxyclic acid core that is connected to two lipophilic polyketide arms. These initial steps feature the priming of an unusual benzoic acid starter unit onto the highly reducing polyketide synthase clz14, followed by oxaloacetate extension and product release to generate a tricarboxylic acid containing product. The phenylalanine ammonia lyase (PAL) clz10 and the acyl-CoA ligase clz12 are involved in transforming phenylalanine into benzoyl-CoA. The citrate synthase-like protein clz17 is involved in connecting the C-alpha-carbons of the hexaketide chain and oxaloacetate to afford the tricarboxylic acid unit. The potential hydrolytic enzymes, clz11 and clz13, are in close proximity to pks2 and may participate in product release. On the other side, the tetraketide arm is synthesized by a the squalestatin tetraketide synthase clz2 and enzymatically esterified to the core in the last biosynthetic step, by the acetyltransferase clz6. The biosynthesis of the tetraketide must involve 3 rounds of chain extension. After the first and second rounds methyl-transfer occurs, and in all rounds of extension the ketoreductase and dehydratase are active. The enoyl reductase and C-MeT of clz2 are not active in the final round of extension. The acetyltransferase clz6 appears to have a broad substrate selectivity for its acyl CoA substrate, allowing the in vitro synthesis of novel squalestatins. The biosynthesis of SQS1 requires several oxidative steps likely performed by oxidoreductases clz3, clz15 and clz16. Finally, in support of the identification of the cluster as being responsible for SQS1 production, the cluster contains a gene encoding a putative squalene synthase (SS) clz20, suggesting a likely mechanism for self-resistance. The protein is Zaragozic acid A biosynthesis cluster protein 8 of Cochliobolus lunatus (Filamentous fungus).